Consider the following 225-residue polypeptide: Single-pass membrane and coiled-coil domain-containing protein 3 (225 aa).

Residues 69–92 (IIQAMTKIQKELQKIDEALKDQLE) adopt a coiled-coil conformation. Residues 155–175 (IGTSLLGSIGVAVLSLGIDMI) form a helical membrane-spanning segment. Residues 182 to 209 (AVERTQLQAAIKSYEKHLEEFKAASAKY) adopt a coiled-coil conformation.

Its subcellular location is the membrane. In Mus musculus (Mouse), this protein is Single-pass membrane and coiled-coil domain-containing protein 3 (Smco3).